The following is a 246-amino-acid chain: Ribonuclease PH (246 aa).

Residues 1–33 (MTPPKLPVREGRDALTPRPVSVQRGVNPHAPGS) are disordered. Residues R90 and 128–130 (GTR) each bind phosphate.

The protein belongs to the RNase PH family. Homohexameric ring arranged as a trimer of dimers.

The enzyme catalyses tRNA(n+1) + phosphate = tRNA(n) + a ribonucleoside 5'-diphosphate. Its function is as follows. Phosphorolytic 3'-5' exoribonuclease that plays an important role in tRNA 3'-end maturation. Removes nucleotide residues following the 3'-CCA terminus of tRNAs; can also add nucleotides to the ends of RNA molecules by using nucleoside diphosphates as substrates, but this may not be physiologically important. Probably plays a role in initiation of 16S rRNA degradation (leading to ribosome degradation) during starvation. The protein is Ribonuclease PH of Deinococcus radiodurans (strain ATCC 13939 / DSM 20539 / JCM 16871 / CCUG 27074 / LMG 4051 / NBRC 15346 / NCIMB 9279 / VKM B-1422 / R1).